The sequence spans 150 residues: 3-hydroxyacyl-[acyl-carrier-protein] dehydratase FabZ (150 aa).

The active site involves H51.

Belongs to the thioester dehydratase family. FabZ subfamily.

The protein localises to the cytoplasm. The enzyme catalyses a (3R)-hydroxyacyl-[ACP] = a (2E)-enoyl-[ACP] + H2O. Its function is as follows. Involved in unsaturated fatty acids biosynthesis. Catalyzes the dehydration of short chain beta-hydroxyacyl-ACPs and long chain saturated and unsaturated beta-hydroxyacyl-ACPs. The sequence is that of 3-hydroxyacyl-[acyl-carrier-protein] dehydratase FabZ from Legionella pneumophila subsp. pneumophila (strain Philadelphia 1 / ATCC 33152 / DSM 7513).